The following is a 128-amino-acid chain: Putative lipid-binding protein At4g00165 (128 aa).

Positions 1–23 (MGISKALRSLLILLLLNITFFFG) are cleaved as a signal peptide. 4 cysteine pairs are disulfide-bonded: Cys34–Cys90, Cys46–Cys76, Cys56–Cys75, and Cys92–Cys128.

Belongs to the plant LTP family. PEARLI1 subfamily.

Its subcellular location is the secreted. The sequence is that of Putative lipid-binding protein At4g00165 from Arabidopsis thaliana (Mouse-ear cress).